A 931-amino-acid polypeptide reads, in one-letter code: Isoleucine--tRNA ligase (931 aa).

The short motif at Pro58–His68 is the 'HIGH' region element. Residue Glu559 coordinates L-isoleucyl-5'-AMP. The short motif at Lys600–Ser604 is the 'KMSKS' region element. Lys603 is an ATP binding site. Residues Cys894, Cys897, Cys914, and Cys917 each contribute to the Zn(2+) site.

It belongs to the class-I aminoacyl-tRNA synthetase family. IleS type 1 subfamily. As to quaternary structure, monomer. Requires Zn(2+) as cofactor.

The protein resides in the cytoplasm. It carries out the reaction tRNA(Ile) + L-isoleucine + ATP = L-isoleucyl-tRNA(Ile) + AMP + diphosphate. Its function is as follows. Catalyzes the attachment of isoleucine to tRNA(Ile). As IleRS can inadvertently accommodate and process structurally similar amino acids such as valine, to avoid such errors it has two additional distinct tRNA(Ile)-dependent editing activities. One activity is designated as 'pretransfer' editing and involves the hydrolysis of activated Val-AMP. The other activity is designated 'posttransfer' editing and involves deacylation of mischarged Val-tRNA(Ile). The protein is Isoleucine--tRNA ligase of Legionella pneumophila (strain Paris).